Reading from the N-terminus, the 374-residue chain is Putative 2,3-diketo-5-methylthiopentyl-1-phosphate enolase (374 aa).

Substrate-binding positions include Lys138, 164 to 167, His255, Gly327, and 349 to 350; these read QDDE and GG. Asp166 lines the Mg(2+) pocket.

The protein belongs to the RuBisCO large chain family. Type IV subfamily. In terms of assembly, homodimer. Mg(2+) is required as a cofactor.

The catalysed reaction is 5-methylsulfanyl-2,3-dioxopentyl phosphate = 2-hydroxy-5-methylsulfanyl-3-oxopent-1-enyl phosphate. It functions in the pathway amino-acid biosynthesis; L-methionine biosynthesis via salvage pathway; L-methionine from S-methyl-5-thio-alpha-D-ribose 1-phosphate: step 3/6. Functionally, catalyzes the enolization of 2,3-diketo-5-methylthiopentyl-1-phosphate (DK-MTP-1-P) into 2-hydroxy-3-keto-5-methylthiopentenyl-1-phosphate (HK-MTPenyl-1-P). The sequence is that of Putative 2,3-diketo-5-methylthiopentyl-1-phosphate enolase (mtnW) from Shouchella clausii (strain KSM-K16) (Alkalihalobacillus clausii).